The chain runs to 209 residues: High frequency lysogenization protein HflD homolog (209 aa).

It belongs to the HflD family.

It localises to the cytoplasm. The protein localises to the cell inner membrane. In Marinomonas sp. (strain MWYL1), this protein is High frequency lysogenization protein HflD homolog.